We begin with the raw amino-acid sequence, 485 residues long: Chromosomal replication initiator protein DnaA (485 aa).

The segment at 1–74 (MEKSKNIWSL…ILTNNGYDNV (74 aa)) is domain I, interacts with DnaA modulators. The interval 74-140 (VTIVFTNQSP…EEEPKNFKNP (67 aa)) is domain II. Positions 141-357 (FLKKRYTFEN…AAVTKLKAYI (217 aa)) are domain III, AAA+ region. Residues Gly-185, Gly-187, Lys-188, and Thr-189 each coordinate ATP. Positions 358-485 (DLDNIEIDID…TELMNKIKKN (128 aa)) are domain IV, binds dsDNA.

This sequence belongs to the DnaA family. In terms of assembly, oligomerizes as a right-handed, spiral filament on DNA at oriC.

It localises to the cytoplasm. In terms of biological role, plays an essential role in the initiation and regulation of chromosomal replication. ATP-DnaA binds to the origin of replication (oriC) to initiate formation of the DNA replication initiation complex once per cell cycle. Binds the DnaA box (a 9 base pair repeat at the origin) and separates the double-stranded (ds)DNA. Forms a right-handed helical filament on oriC DNA; dsDNA binds to the exterior of the filament while single-stranded (ss)DNA is stabiized in the filament's interior. The ATP-DnaA-oriC complex binds and stabilizes one strand of the AT-rich DNA unwinding element (DUE), permitting loading of DNA polymerase. After initiation quickly degrades to an ADP-DnaA complex that is not apt for DNA replication. Binds acidic phospholipids. The protein is Chromosomal replication initiator protein DnaA of Borreliella afzelii (strain PKo) (Borrelia afzelii).